Consider the following 186-residue polypeptide: Large ribosomal subunit protein uL10 (186 aa).

The protein belongs to the universal ribosomal protein uL10 family. As to quaternary structure, part of the ribosomal stalk of the 50S ribosomal subunit. The N-terminus interacts with L11 and the large rRNA to form the base of the stalk. The C-terminus forms an elongated spine to which L12 dimers bind in a sequential fashion forming a multimeric L10(L12)X complex.

Its function is as follows. Forms part of the ribosomal stalk, playing a central role in the interaction of the ribosome with GTP-bound translation factors. The chain is Large ribosomal subunit protein uL10 from Roseiflexus sp. (strain RS-1).